The primary structure comprises 344 residues: Dihydroorotase (344 aa).

His14 and His16 together coordinate Zn(2+). Residues 16–18 and Asn42 each bind substrate; that span reads HLR. Residues Lys99, His136, and His174 each coordinate Zn(2+). Residue Lys99 is modified to N6-carboxylysine. A substrate-binding site is contributed by His136. Leu219 contacts substrate. A Zn(2+)-binding site is contributed by Asp247. The active site involves Asp247. Residues His251 and Ala263 each coordinate substrate.

This sequence belongs to the metallo-dependent hydrolases superfamily. DHOase family. Class II DHOase subfamily. As to quaternary structure, homodimer. Zn(2+) serves as cofactor.

The enzyme catalyses (S)-dihydroorotate + H2O = N-carbamoyl-L-aspartate + H(+). The protein operates within pyrimidine metabolism; UMP biosynthesis via de novo pathway; (S)-dihydroorotate from bicarbonate: step 3/3. In terms of biological role, catalyzes the reversible cyclization of carbamoyl aspartate to dihydroorotate. The protein is Dihydroorotase of Teredinibacter turnerae (strain ATCC 39867 / T7901).